We begin with the raw amino-acid sequence, 690 residues long: Protein-glutamine gamma-glutamyltransferase 2 (690 aa).

Ala2 carries the post-translational modification N-acetylalanine. Cystine bridges form between Cys230/Cys370 and Cys370/Cys371. Active-site residues include Cys277, His335, and Asp358. Ca(2+)-binding residues include Asn398, Asp400, Glu436, Glu446, and Glu451. At Lys467 the chain carries N6-acetyllysine. 479 to 486 (RIRVGQNM) provides a ligand contact to GTP. Glu542 serves as a coordination point for Ca(2+). 583–586 (RDIY) is a binding site for GTP. An Isoglutamyl lysine isopeptide (Gln-Lys) (interchain with K-?) cross-link involves residue Gln636.

The protein belongs to the transglutaminase superfamily. Transglutaminase family. In terms of assembly, monomer. Interacts with phospholipase C; promoting alpha-1 adrenergic receptor signaling. Interacts with PLCD1. Requires Ca(2+) as cofactor. Post-translationally, disulfide bond formation inactivates the calcium-dependent acyltransferase activity. Cys-370 can form disulfide bonds with both Cys-230 and Cys-371: formation of a disulfide bond between Cys-230 and Cys-370 facilitates formation of the disulfide between Cys-370 and Cys-371, which promotes inactivation of the acyltransferase activity. May also form interchain disulfids between Cys-230 and Cys-370. Ca(2+) protects against disulfide bond formation and inactivation. Auto-transglutaminated: Forms covalent cross-links mediated by transglutaminase between Gln-636 and the epsilon-amino group of a lysine residue of itself or HMGB1, forming homopolymers and heteropolymers, respectively. In terms of processing, S-nitrosylated, leading to inactivation of the acyltransferase activity.

Its subcellular location is the cytoplasm. It is found in the cytosol. It localises to the nucleus. The protein resides in the chromosome. The protein localises to the secreted. Its subcellular location is the extracellular space. It is found in the extracellular matrix. It localises to the cell membrane. The protein resides in the mitochondrion. The catalysed reaction is L-glutaminyl-[protein] + L-lysyl-[protein] = [protein]-L-lysyl-N(6)-5-L-glutamyl-[protein] + NH4(+). It catalyses the reaction L-glutaminyl-[protein] + serotonin = 5-serotonyl-L-glutamyl-[protein] + NH4(+). It carries out the reaction L-glutaminyl-[protein] + dopamine = 5-dopaminyl-L-glutamyl-[protein] + NH4(+). The enzyme catalyses L-glutaminyl-[protein] + histamine = 5-histaminyl-L-glutamyl-[protein] + NH4(+). The catalysed reaction is L-glutaminyl-[protein] + (R)-noradrenaline = 5-(R)-noradrenalinyl-L-glutamyl-[protein] + NH4(+). It catalyses the reaction L-glutaminyl-[protein] + H2O = L-glutamyl-[protein] + NH4(+). Its activity is regulated as follows. Acyltransferase activity is regulated by the binding of GTP and Ca(2+): inactivated by GTP, which stabilizes its closed structure, thereby obstructing the accessibility of substrates to the active sites. In contrast, Ca(2+) acts as a cofactor by inducing conformational change to the active open form. In absence of Ca(2+), Mg(2+) may bind Ca(2+)-binding sites, promoting GTP-binding and subsequent inhibition of the acyltransferase activity. Extracellularly reduced and activated by CLIC3. In terms of biological role, calcium-dependent acyltransferase that catalyzes the formation of covalent bonds between peptide-bound glutamine and various primary amines, such as gamma-amino group of peptide-bound lysine, or mono- and polyamines, thereby producing cross-linked or aminated proteins, respectively. Involved in many biological processes, such as bone development, angiogenesis, wound healing, cellular differentiation, chromatin modification and apoptosis. Acts as a protein-glutamine gamma-glutamyltransferase by mediating the cross-linking of proteins, such as ACO2, HSPB6, FN1, HMGB1, RAP1GDS1, SLC25A4/ANT1, SPP1 and WDR54. Under physiological conditions, the protein cross-linking activity is inhibited by GTP; inhibition is relieved by Ca(2+) in response to various stresses. When secreted, catalyzes cross-linking of proteins of the extracellular matrix, such as FN1 and SPP1 resulting in the formation of scaffolds. Plays a key role during apoptosis, both by (1) promoting the cross-linking of cytoskeletal proteins resulting in condensation of the cytoplasm, and by (2) mediating cross-linking proteins of the extracellular matrix, resulting in the irreversible formation of scaffolds that stabilize the integrity of the dying cells before their clearance by phagocytosis, thereby preventing the leakage of harmful intracellular components. In addition to protein cross-linking, can use different monoamine substrates to catalyze a vast array of protein post-translational modifications: mediates aminylation of serotonin, dopamine, noradrenaline or histamine into glutamine residues of target proteins to generate protein serotonylation, dopaminylation, noradrenalinylation or histaminylation, respectively. Mediates protein serotonylation of small GTPases during activation and aggregation of platelets, leading to constitutive activation of these GTPases. Plays a key role in chromatin organization by mediating serotonylation and dopaminylation of histone H3. Catalyzes serotonylation of 'Gln-5' of histone H3 (H3Q5ser) during serotonergic neuron differentiation, thereby facilitating transcription. Acts as a mediator of neurotransmission-independent role of nuclear dopamine in ventral tegmental area (VTA) neurons: catalyzes dopaminylation of 'Gln-5' of histone H3 (H3Q5dop), thereby regulating relapse-related transcriptional plasticity in the reward system. Regulates vein remodeling by mediating serotonylation and subsequent inactivation of ATP2A2/SERCA2. Also acts as a protein deamidase by mediating the side chain deamidation of specific glutamine residues of proteins to glutamate. Catalyzes specific deamidation of protein gliadin, a component of wheat gluten in the diet. May also act as an isopeptidase cleaving the previously formed cross-links. Also able to participate in signaling pathways independently of its acyltransferase activity: acts as a signal transducer in alpha-1 adrenergic receptor-mediated stimulation of phospholipase C-delta (PLCD) activity and is required for coupling alpha-1 adrenergic agonists to the stimulation of phosphoinositide lipid metabolism. The chain is Protein-glutamine gamma-glutamyltransferase 2 from Cavia cutleri (Guinea pig).